Here is a 474-residue protein sequence, read N- to C-terminus: Cryptochrome DASH (474 aa).

The Photolyase/cryptochrome alpha/beta domain maps to 2-136 (DTAVVWFRDD…ALRQRWTHTL (135 aa)). The segment covering 161-171 (EAAATVRDPRS) has biased composition (basic and acidic residues). The disordered stretch occupies residues 161 to 202 (EAAATVRDPRSAPETVPTPDGLTPGPVPTVESLGVSEPPTDD).

Belongs to the DNA photolyase class-1 family. Requires FAD as cofactor. It depends on (6R)-5,10-methylene-5,6,7,8-tetrahydrofolate as a cofactor.

Functionally, may have a photoreceptor function. Binds DNA; probably functions as a transcriptional repressor. In Natronomonas pharaonis (strain ATCC 35678 / DSM 2160 / CIP 103997 / JCM 8858 / NBRC 14720 / NCIMB 2260 / Gabara) (Halobacterium pharaonis), this protein is Cryptochrome DASH (cry).